Reading from the N-terminus, the 197-residue chain is Adenylyl-sulfate kinase (197 aa).

33–40 (GLSGSGKS) serves as a coordination point for ATP. Ser-107 (phosphoserine intermediate) is an active-site residue.

Belongs to the APS kinase family.

It carries out the reaction adenosine 5'-phosphosulfate + ATP = 3'-phosphoadenylyl sulfate + ADP + H(+). It functions in the pathway sulfur metabolism; hydrogen sulfide biosynthesis; sulfite from sulfate: step 2/3. Functionally, catalyzes the synthesis of activated sulfate. The protein is Adenylyl-sulfate kinase of Bacillus velezensis (strain DSM 23117 / BGSC 10A6 / LMG 26770 / FZB42) (Bacillus amyloliquefaciens subsp. plantarum).